Here is a 437-residue protein sequence, read N- to C-terminus: Major royal jelly protein 6 (437 aa).

A signal peptide spans 1–20 (MTNWLLLIVCLSIACQDVTS). N-linked (GlcNAc...) asparagine glycosylation is found at Asn-78, Asn-164, Asn-181, Asn-201, and Asn-324.

This sequence belongs to the major royal jelly protein family. In terms of tissue distribution, found in and secreted from the hypopharyngeal glands of the worker honey bee (at protein level); expression peaks at 20 days post eclosion. Expressed in the spermatheca of adult queen bees (at protein level); Expression levels are higher in mated queens than in virgin queens. Expressed at low level in the brains of adult worker bees. Protein abundance does not seem to correlate with transcript abundance.

It is found in the secreted. Component of royal jelly, a substance produced in the hypopharyngeal gland containing proteins, free amino acids, fatty acids, sugars and other nutrients, which is fed to developing larvae by worker nurse bees. All larvae are fed some royal jelly (also known as worker jelly) early in their development but it forms the principal source of nutrition for larvae destined to become queen bees. Produced in the spermatheca of adult queen bees, along with other major royal jelly proteins, where it may act as a nutrient supply for sperm stored by mated queens, or be involved in energy metabolism. The polypeptide is Major royal jelly protein 6 (Apis mellifera (Honeybee)).